We begin with the raw amino-acid sequence, 307 residues long: Aspartate carbamoyltransferase catalytic subunit (307 aa).

Residues Arg56 and Thr57 each coordinate carbamoyl phosphate. Residue Lys84 coordinates L-aspartate. Carbamoyl phosphate contacts are provided by Arg106, His136, and Gln139. The L-aspartate site is built by Arg169 and Arg221. Residues Ala262 and Pro263 each coordinate carbamoyl phosphate.

Belongs to the aspartate/ornithine carbamoyltransferase superfamily. ATCase family. In terms of assembly, heterododecamer (2C3:3R2) of six catalytic PyrB chains organized as two trimers (C3), and six regulatory PyrI chains organized as three dimers (R2).

The enzyme catalyses carbamoyl phosphate + L-aspartate = N-carbamoyl-L-aspartate + phosphate + H(+). It participates in pyrimidine metabolism; UMP biosynthesis via de novo pathway; (S)-dihydroorotate from bicarbonate: step 2/3. Functionally, catalyzes the condensation of carbamoyl phosphate and aspartate to form carbamoyl aspartate and inorganic phosphate, the committed step in the de novo pyrimidine nucleotide biosynthesis pathway. The chain is Aspartate carbamoyltransferase catalytic subunit from Streptococcus pneumoniae (strain 70585).